The chain runs to 1373 residues: MVQLTKQFGKIKVEVPIPHLLNLQVDSYKKFLQEGLLEPLPEEGLESVFRSVFPIEDFNRTSSLEFVNYKIGEPKYDQAECIAKGLTYEAPIRIKVRLIIYDVDSDTESRTVHDIKEQDIYFGTLPLMTEKGTFIINGTERVIVNQLQRSPGIIFEHDSGKTHASRKVLYSCRIIPMRGSWLDFDFDHKDILYVRIDRRRKMPATILLKAMGMGKQDILNFFYKKETYILDNDGRIKWKFDPSLFRKDIAYTDILDNDNNLLVAAGKTITKRVWRQMEASGLEAFEVDPSTVIGQFLAEDIIDTSTGEILAESAEEITEGLIQTFRDAGITTFTVLHTRGNDTSSSIRDTLVQDKIPTTEKAQEEIYRRLRPSSPPTPEIAASFFDNLFRNNSYYDLSPVGRYKLNQRLDNYENATLRTLSDNDILEAIKLLTHLKDSHGPADDIDHLGNRRVRLVGELVENQYRIGLVRMERAIKERMSIQEVATLMPHDLINPKPVAALLKEFFGTSQLSQFMDQTNSLSEVTHKRRLSALGPGGLTRERAGFEVRDVHVSHYGRICPIETPEGPNIGLIVSLTTYAKVNDYGFIETPYRVVRNGYVTDEIIHLDASCEFSEVIAQANASIDSEGRLIDDYVTTRARGDVLMSAREEVTLMDISPSQMVSISAALIPFLEHDDANRALMGSNMQRQAVPLLRSERPLVGTGMEVDVAHDSGSCILAEGDGIIRYADANRIIVSYDDPNLYPEFGGVRAYDLLKYHKSNQNFCFGQRPSCIPGQIVKKGEVLADGPAIRDGGLALGKNLVVAFMPWCGYNFEDSILISERVVKEDTYTSVHIEEFEIVARDTKLGPEEITRDIPNVGEEMLSNLDENGIIRIGAAVKPEDILVGKITPKGETQLTPEEKLLRAIFGDKARDVKNTSLKVPPGIEGTVIDVKVFNRRSGEKDDRTRLIEDYEISLMDSKEQNYIKSITQRMKEKILPLINGKQLGTTILGKGKGEVLAEENSAITPELLDSLPLKKLEGAFKSKELNETITEMLSQYEKQINYIKTIYDSKRGKVTEGDDLPPGVIRMVKVHIAVKRKLAVGDKMAGRHGNKGVVSCILPEEDMPFFADGSPVDIVLNPLGVPSRMNIGQIMETHLGWAAKELGQQLNNMVEQGVAIQSLREQVKSVFESPEISAEIDAMDDDTFRTSVQKLKKGIITMTPVFDGAGESEVWDWLAKAGLPSDGKAILYDGRTGEAFKNRVTTGVMYILKLHHLVDEKIHARSTGPYSLVTQQPLGGKAQFGGQRLGEMEVWALEAYGASYLLQEFLTVKSDDVSGRVKMYEKIVKGDNFLEAGLPESFNVLVKELMSLGLNVTLHQEEGKKKPKRTGLIDKE.

Belongs to the RNA polymerase beta chain family. The RNAP catalytic core consists of 2 alpha, 1 beta, 1 beta' and 1 omega subunit. When a sigma factor is associated with the core the holoenzyme is formed, which can initiate transcription.

It catalyses the reaction RNA(n) + a ribonucleoside 5'-triphosphate = RNA(n+1) + diphosphate. DNA-dependent RNA polymerase catalyzes the transcription of DNA into RNA using the four ribonucleoside triphosphates as substrates. This is DNA-directed RNA polymerase subunit beta from Lawsonia intracellularis (strain PHE/MN1-00).